Here is a 280-residue protein sequence, read N- to C-terminus: UDP-3-O-acyl-N-acetylglucosamine deacetylase (280 aa).

Zn(2+) contacts are provided by His79, His237, and Asp241. Residue His264 is the Proton donor of the active site.

This sequence belongs to the LpxC family. Requires Zn(2+) as cofactor.

It carries out the reaction a UDP-3-O-[(3R)-3-hydroxyacyl]-N-acetyl-alpha-D-glucosamine + H2O = a UDP-3-O-[(3R)-3-hydroxyacyl]-alpha-D-glucosamine + acetate. Its pathway is glycolipid biosynthesis; lipid IV(A) biosynthesis; lipid IV(A) from (3R)-3-hydroxytetradecanoyl-[acyl-carrier-protein] and UDP-N-acetyl-alpha-D-glucosamine: step 2/6. Its function is as follows. Catalyzes the hydrolysis of UDP-3-O-myristoyl-N-acetylglucosamine to form UDP-3-O-myristoylglucosamine and acetate, the committed step in lipid A biosynthesis. In Chlamydia felis (strain Fe/C-56) (Chlamydophila felis), this protein is UDP-3-O-acyl-N-acetylglucosamine deacetylase.